We begin with the raw amino-acid sequence, 1495 residues long: Collagen alpha-1(XVII) chain (1495 aa).

The span at 1–17 (MDSVTKKTRQDGSEVTE) shows a compositional bias: basic and acidic residues. The segment at 1-138 (MDSVTKKTRQ…VRLQSASPSG (138 aa)) is disordered. At 1–435 (MDSVTKKTRQ…CGSCCSWWKW (435 aa)) the chain is on the cytoplasmic side. Residues 1-535 (MDSVTKKTRQ…IERGYFRGER (535 aa)) form a nonhelical region (NC16) region. Residues 19–32 (QGGSSSGLKTSSHT) show a composition bias toward polar residues. Low complexity predominate over residues 51–63 (SSGSGRLNSSSSG). Composition is skewed to polar residues over residues 64-80 (YRQT…SPGS) and 95-104 (EGSSSANSSP). A helical; Signal-anchor for type II membrane protein transmembrane segment spans residues 436–456 (LLGLLLAWLLLLGLLFGLIAL). Topologically, residues 457–1495 (AEEVRKLKSR…GRRRRRSVGV (1039 aa)) are extracellular. Disordered regions lie at residues 532–824 (RGER…EKGS), 847–999 (DLQG…SSSQ), 1160–1185 (EFSG…SSGI), 1201–1226 (SISG…TGLL), 1251–1278 (RSYI…LVAG), 1295–1336 (GGSI…GSYG), and 1396–1416 (MSYT…PGIS). The tract at residues 536–1482 (GEPGMKGDMG…KGEKGEKGEQ (947 aa)) is triple-helical region. 2 stretches are compositionally biased toward low complexity: residues 702–711 (PGAKGPAGQA) and 761–773 (RPGA…APGK). The segment covering 786 to 807 (PGPPGPPGPIGPTGPPGVPGPV) has biased composition (pro residues). The segment covering 809-818 (PAGLPGQQGP) has biased composition (low complexity). Composition is skewed to pro residues over residues 871-886 (PRGP…PPGR), 901-910 (PPGPPGPPGP), 946-955 (PPGPPGPPGP), 981-993 (PPGP…PPGP), 1167-1179 (PPGP…PPGI), 1208-1218 (PPGPPGPPGPP), and 1257-1269 (PPGP…PPGP). Residues 1296 to 1308 (GSIGAEGSHGGSL) show a composition bias toward gly residues. The segment covering 1309–1336 (GASSSYGSSMSSSMSSYSASMGSDGSYG) has biased composition (low complexity). Over residues 1403-1413 (PPGPPGPPGPP) the composition is skewed to pro residues. N-linked (GlcNAc...) asparagine glycosylation is present at N1424. The tract at residues 1435 to 1495 (THGTVRGPPG…GRRRRRSVGV (61 aa)) is disordered. Basic and acidic residues predominate over residues 1472–1481 (PKGEKGEKGE). The nonhelical region (NC1) stretch occupies residues 1483–1495 (MYSGRRRRRSVGV). Over residues 1486–1495 (GRRRRRSVGV) the composition is skewed to basic residues.

In terms of assembly, homotrimers of alpha 1(XVII)chains. Post-translationally, the intracellular/endo domain is disulfide-linked. Prolines at the third position of the tripeptide repeating unit (G-X-Y) are hydroxylated in some or all of the chains. In terms of processing, the ectodomain is shedded from the surface of keratinocytes resulting in a 120-kDa soluble form, also named as 120 kDa linear IgA disease antigen homolog. The shedding is mediated by membrane-bound metalloproteases. Cornea specific.

The protein localises to the cell junction. It localises to the hemidesmosome. The protein resides in the membrane. It is found in the secreted. Its subcellular location is the extracellular space. The protein localises to the extracellular matrix. It localises to the basement membrane. Its function is as follows. May play a role in the integrity of hemidesmosome and the attachment of basal keratinocytes to the underlying basement membrane. Functionally, the 120 kDa linear IgA disease antigen homolog is an anchoring filament component involved in dermal-epidermal cohesion. The chain is Collagen alpha-1(XVII) chain (COL17A1) from Gallus gallus (Chicken).